The chain runs to 257 residues: UPF0246 protein HAPS_0280 (257 aa).

This sequence belongs to the UPF0246 family.

The sequence is that of UPF0246 protein HAPS_0280 from Glaesserella parasuis serovar 5 (strain SH0165) (Haemophilus parasuis).